The following is a 347-amino-acid chain: Nicotinate-nucleotide--dimethylbenzimidazole phosphoribosyltransferase (347 aa).

Glu-316 serves as the catalytic Proton acceptor.

The protein belongs to the CobT family.

The enzyme catalyses 5,6-dimethylbenzimidazole + nicotinate beta-D-ribonucleotide = alpha-ribazole 5'-phosphate + nicotinate + H(+). Its pathway is nucleoside biosynthesis; alpha-ribazole biosynthesis; alpha-ribazole from 5,6-dimethylbenzimidazole: step 1/2. Its function is as follows. Catalyzes the synthesis of alpha-ribazole-5'-phosphate from nicotinate mononucleotide (NAMN) and 5,6-dimethylbenzimidazole (DMB). The protein is Nicotinate-nucleotide--dimethylbenzimidazole phosphoribosyltransferase of Vibrio parahaemolyticus serotype O3:K6 (strain RIMD 2210633).